The chain runs to 175 residues: Glutamyl-tRNA(Gln) amidotransferase subunit F, mitochondrial (175 aa).

A mitochondrion-targeting transit peptide spans 1–19 (MLKVSARHAPVLRLPRRFY).

Belongs to the GatF family. In terms of assembly, subunit of the heterotrimeric GatFAB amidotransferase (AdT) complex, composed of A, B and F subunits.

It is found in the mitochondrion inner membrane. The catalysed reaction is L-glutamyl-tRNA(Gln) + L-glutamine + ATP + H2O = L-glutaminyl-tRNA(Gln) + L-glutamate + ADP + phosphate + H(+). Its function is as follows. Allows the formation of correctly charged Gln-tRNA(Gln) through the transamidation of misacylated Glu-tRNA(Gln) in the mitochondria. The reaction takes place in the presence of glutamine and ATP through an activated gamma-phospho-Glu-tRNA(Gln). Required for proper protein synthesis within the mitochondrion. This Lachancea thermotolerans (strain ATCC 56472 / CBS 6340 / NRRL Y-8284) (Yeast) protein is Glutamyl-tRNA(Gln) amidotransferase subunit F, mitochondrial.